Reading from the N-terminus, the 476-residue chain is Cysteine--tRNA ligase (476 aa).

Residue cysteine 29 coordinates Zn(2+). A 'HIGH' region motif is present at residues 31–41 (PTVYDYPHLGH). The Zn(2+) site is built by cysteine 209, histidine 234, and glutamate 238. The 'KMSKS' region signature appears at 266-270 (KMSKS). Lysine 269 contributes to the ATP binding site.

It belongs to the class-I aminoacyl-tRNA synthetase family. It depends on Zn(2+) as a cofactor.

It is found in the cytoplasm. The catalysed reaction is tRNA(Cys) + L-cysteine + ATP = L-cysteinyl-tRNA(Cys) + AMP + diphosphate. The protein is Cysteine--tRNA ligase of Thermococcus gammatolerans (strain DSM 15229 / JCM 11827 / EJ3).